Reading from the N-terminus, the 582-residue chain is Dihydroxy-acid dehydratase 3 (582 aa).

Residue C67 participates in [2Fe-2S] cluster binding. Residue D99 participates in Mg(2+) binding. C140 is a [2Fe-2S] cluster binding site. The Mg(2+) site is built by D141 and K142. An N6-carboxylysine modification is found at K142. Residue C212 participates in [2Fe-2S] cluster binding. Position 462 (E462) interacts with Mg(2+). The active-site Proton acceptor is the S488.

The protein belongs to the IlvD/Edd family. In terms of assembly, homodimer. The cofactor is [2Fe-2S] cluster. Requires Mg(2+) as cofactor.

It carries out the reaction (2R)-2,3-dihydroxy-3-methylbutanoate = 3-methyl-2-oxobutanoate + H2O. The catalysed reaction is (2R,3R)-2,3-dihydroxy-3-methylpentanoate = (S)-3-methyl-2-oxopentanoate + H2O. The protein operates within amino-acid biosynthesis; L-isoleucine biosynthesis; L-isoleucine from 2-oxobutanoate: step 3/4. It functions in the pathway amino-acid biosynthesis; L-valine biosynthesis; L-valine from pyruvate: step 3/4. Functions in the biosynthesis of branched-chain amino acids. Catalyzes the dehydration of (2R,3R)-2,3-dihydroxy-3-methylpentanoate (2,3-dihydroxy-3-methylvalerate) into 2-oxo-3-methylpentanoate (2-oxo-3-methylvalerate) and of (2R)-2,3-dihydroxy-3-methylbutanoate (2,3-dihydroxyisovalerate) into 2-oxo-3-methylbutanoate (2-oxoisovalerate), the penultimate precursor to L-isoleucine and L-valine, respectively. This is Dihydroxy-acid dehydratase 3 from Bradyrhizobium diazoefficiens (strain JCM 10833 / BCRC 13528 / IAM 13628 / NBRC 14792 / USDA 110).